The primary structure comprises 272 residues: Shikimate dehydrogenase (NADP(+)) (272 aa).

Shikimate-binding positions include 14–16 (SKS) and Thr61. Lys65 serves as the catalytic Proton acceptor. Glu77 is an NADP(+) binding site. The shikimate site is built by Asn86 and Asp102. NADP(+) is bound by residues 126 to 130 (GAGGA), 149 to 154 (NRTVSR), and Met213. Tyr215 provides a ligand contact to shikimate. NADP(+) is bound at residue Gly237.

This sequence belongs to the shikimate dehydrogenase family. In terms of assembly, homodimer.

It catalyses the reaction shikimate + NADP(+) = 3-dehydroshikimate + NADPH + H(+). It participates in metabolic intermediate biosynthesis; chorismate biosynthesis; chorismate from D-erythrose 4-phosphate and phosphoenolpyruvate: step 4/7. Involved in the biosynthesis of the chorismate, which leads to the biosynthesis of aromatic amino acids. Catalyzes the reversible NADPH linked reduction of 3-dehydroshikimate (DHSA) to yield shikimate (SA). This Shigella boydii serotype 18 (strain CDC 3083-94 / BS512) protein is Shikimate dehydrogenase (NADP(+)).